The following is a 338-amino-acid chain: Malate dehydrogenase, mitochondrial (338 aa).

The transit peptide at 1 to 24 directs the protein to the mitochondrion; that stretch reads MLSALARPASAALRRSFSTSAQNN. NAD(+) is bound by residues 31–37 and Asp57; that span reads GASGGIG. O-linked (GlcNAc) serine glycosylation is present at Ser33. 2 positions are modified to N6-acetyllysine; alternate: Lys78 and Lys91. Lys78 and Lys91 each carry N6-succinyllysine; alternate. Substrate-binding residues include Arg104 and Arg110. Residues Asn117 and 140 to 142 each bind NAD(+); that span reads IAN. Asn142 contributes to the substrate binding site. Lys165 is modified (N6-acetyllysine). Arg176 lines the substrate pocket. The residue at position 185 (Lys185) is an N6-acetyllysine; alternate. Lys185 is modified (N6-succinyllysine; alternate). Catalysis depends on His200, which acts as the Proton acceptor. Lys203 is subject to N6-succinyllysine. An N6-acetyllysine; alternate mark is found at Lys215 and Lys239. Residues Lys215 and Lys239 each carry the N6-succinyllysine; alternate modification. An N6-malonyllysine; alternate modification is found at Lys239. Ser246 bears the Phosphoserine mark. Met251 serves as a coordination point for NAD(+). The residue at position 269 (Lys269) is an N6-succinyllysine. N6-acetyllysine; alternate occurs at positions 296, 301, 307, 314, and 324. Residues Lys296, Lys301, Lys307, Lys314, and Lys324 each carry the N6-succinyllysine; alternate modification. N6-malonyllysine; alternate is present on Lys307. A Phosphoserine modification is found at Ser326. Lys328, Lys329, and Lys335 each carry N6-acetyllysine; alternate. An N6-succinyllysine; alternate modification is found at Lys328. Residue Lys329 is modified to N6-malonyllysine; alternate. Residue Lys335 is modified to N6-succinyllysine; alternate.

This sequence belongs to the LDH/MDH superfamily. MDH type 1 family. As to quaternary structure, homodimer. Acetylation is enhanced by up to 67% after treatment either with trichostin A (TSA) or with nicotinamide (NAM) with the appearance of tri- and tetraacetylations. Glucose also increases acetylation by about 60%.

The protein resides in the mitochondrion matrix. The enzyme catalyses (S)-malate + NAD(+) = oxaloacetate + NADH + H(+). Enzyme activity is enhanced by acetylation. This Homo sapiens (Human) protein is Malate dehydrogenase, mitochondrial (MDH2).